Consider the following 156-residue polypeptide: Small ribosomal subunit protein uS7 (156 aa).

The protein belongs to the universal ribosomal protein uS7 family. Part of the 30S ribosomal subunit. Contacts proteins S9 and S11.

In terms of biological role, one of the primary rRNA binding proteins, it binds directly to 16S rRNA where it nucleates assembly of the head domain of the 30S subunit. Is located at the subunit interface close to the decoding center, probably blocks exit of the E-site tRNA. In Rhizobium meliloti (strain 1021) (Ensifer meliloti), this protein is Small ribosomal subunit protein uS7.